The sequence spans 872 residues: Cellulose synthase catalytic subunit [UDP-forming] (872 aa).

The next 4 helical transmembrane spans lie at 30–50 (SAFS…FIPL), 151–171 (ILGI…TQPF), 173–193 (PLAQ…VRRM), and 230–250 (LVCG…LVLG). The segment at 271–364 (LWPSVDIFVP…FVSIFDCDHV (94 aa)) is catalytic subdomain A. Residue Asp313 is part of the active site. Substrate contacts are provided by Asp360 and Asp362. The segment at 441–501 (KPLDEIGGIA…GQRIRWARGM (61 aa)) is catalytic subdomain B. The active site involves Asp457. Transmembrane regions (helical) follow at residues 525–545 (VNAM…TAPL), 547–567 (FLLL…LFVL), 592–612 (IYET…LINP), 640–660 (IFLV…YFYG), and 668–688 (VVVS…AVAV). A PilZ domain is found at 694-790 (QVRRSHRVEM…QHIDFVQCTF (97 aa)). A helical transmembrane segment spans residues 833–853 (SVKGIFRVLTSLVSWVVSFIP).

This sequence belongs to the glycosyltransferase 2 family. Requires Mg(2+) as cofactor.

The protein localises to the cell inner membrane. The enzyme catalyses [(1-&gt;4)-beta-D-glucosyl](n) + UDP-alpha-D-glucose = [(1-&gt;4)-beta-D-glucosyl](n+1) + UDP + H(+). It functions in the pathway glycan metabolism; bacterial cellulose biosynthesis. With respect to regulation, activated by bis-(3'-5') cyclic diguanylic acid (c-di-GMP). In terms of biological role, catalytic subunit of cellulose synthase. It polymerizes uridine 5'-diphosphate glucose to cellulose, which is produced as an extracellular component for mechanical and chemical protection at the onset of the stationary phase, when the cells exhibit multicellular behavior (rdar morphotype). Coexpression of cellulose and thin aggregative fimbriae leads to a hydrophobic network with tightly packed cells embedded in a highly inert matrix. The chain is Cellulose synthase catalytic subunit [UDP-forming] (bcsA) from Escherichia coli O157:H7.